The following is a 1045-amino-acid chain: Protein phosphatase Slingshot (1045 aa).

A compositionally biased stretch (polar residues) spans 1–20 (MALVTVQRSPSVAGSCSNSD). Disordered stretches follow at residues 1-35 (MALVTVQRSPSVAGSCSNSDGESEDDEGNSKGNDR), 58-80 (TQSERRLSTDSTRSSNSTQSNNS), 143-194 (KVGG…DNKN), and 306-325 (ESRRPPSPDAIRNKPPEKEE). Residues 66–80 (TDSTRSSNSTQSNNS) show a composition bias toward low complexity. The span at 149 to 174 (GTKSSTSPAVPTQRQLSVEQTATEAS) shows a compositional bias: polar residues. Basic and acidic residues predominate over residues 175–185 (SKCDKTADKEN). In terms of domain architecture, DEK-C spans 324–379 (EETESVIKMKLKAIMMSVDLDEVTSKYIRGRLEEILDMDLGEYKSFIDAEMLVILG). The Tyrosine-protein phosphatase domain occupies 383-524 (APTKIFEHVY…LETYSGMLDA (142 aa)). The active-site Phosphocysteine intermediate is cysteine 468. Residues 529–547 (EKLQRSKSETNLKSTKDAR) are compositionally biased toward basic and acidic residues. 3 disordered regions span residues 529–631 (EKLQ…PERS), 699–799 (SHLG…GDNR), and 1001–1045 (ACSA…SDSS). The segment covering 560–569 (ALNQAKSKST) has biased composition (polar residues). Positions 586–601 (MHRRSIAQKSQRRMVR) are enriched in basic residues. Over residues 602-625 (RSSSTSPKTQTAVVTKQQSQSMEN) the composition is skewed to polar residues. Low complexity predominate over residues 704–713 (SVSGSSSGNI). Serine 719 bears the Phosphoserine mark. Over residues 721 to 732 (CSDVFSSQVDSV) the composition is skewed to low complexity. 2 stretches are compositionally biased toward polar residues: residues 764–774 (TPQQQKQQSNA) and 1008–1021 (KKTTSHQSLPSSPV). Low complexity predominate over residues 1029 to 1045 (SAASNSNSSASNSSDSS).

Belongs to the protein-tyrosine phosphatase family. In terms of assembly, interacts with actin.

The protein resides in the cytoplasm. It localises to the cytoskeleton. It carries out the reaction O-phospho-L-tyrosyl-[protein] + H2O = L-tyrosyl-[protein] + phosphate. The catalysed reaction is O-phospho-L-seryl-[protein] + H2O = L-seryl-[protein] + phosphate. It catalyses the reaction O-phospho-L-threonyl-[protein] + H2O = L-threonyl-[protein] + phosphate. Functionally, protein phosphatase which regulates actin filament dynamics. Dephosphorylates and activates the actin binding/depolymerizing factor tsr/cofilin, which subsequently binds to actin filaments and stimulates their disassembly. Required for axon growth. The polypeptide is Protein phosphatase Slingshot (ssh) (Drosophila melanogaster (Fruit fly)).